The following is a 107-amino-acid chain: uncharacterized protein (107 aa).

Positions 1–20 are cleaved as a signal peptide; that stretch reads MYIKGRLIFFFVVLVIALCS.

This is an uncharacterized protein from Listeria monocytogenes serovar 1/2a (strain ATCC BAA-679 / EGD-e).